The chain runs to 137 residues: DNA-directed RNA polymerase I subunit RPA14 (137 aa).

Residues 100 to 137 form a disordered region; it reads PPAQDFSAAPIQVSTTEKKETSIGVSATGGKKTTFADE. Residue Ser121 is modified to Phosphoserine.

Component of the RNA polymerase I (Pol I) complex consisting of 14 subunits: RPA135, RPA190, RPC40, RPA14, RPB5, RPO26, RPA43, RPB8, RPA12, RPB10, RPC19, RPC10, RPA49 and RPA34. The complex is composed of a horseshoe-shaped core containing ten subunits (RPA135, RPA190, RPB5, RPO26, RPB8, RPB10, RPC10, RPA12, RPC19 and RPC40) where RPA135 and RPA190 form the DNA-binding cleft. Outside of the core, RPA14 and RPA43 form the stalk that mediates interactions with transcription initiation factors and newly synthesized RNA. Post-translationally, the N-terminus is blocked.

Its subcellular location is the nucleus. The protein localises to the nucleolus. In terms of biological role, DNA-dependent RNA polymerases catalyze the transcription of DNA into RNA using the four ribonucleoside triphosphates as substrates. Component of RNA polymerase I (Pol I) which synthesizes ribosomal RNA precursors. RPA14 seems to play a role in the stability of subunits RPO26 and RPA43. In vitro, the RPA14-RPA43 subcomplex binds single-stranded RNA. This Saccharomyces cerevisiae (strain ATCC 204508 / S288c) (Baker's yeast) protein is DNA-directed RNA polymerase I subunit RPA14 (RPA14).